A 527-amino-acid polypeptide reads, in one-letter code: Tyrosine-protein kinase TXK (527 aa).

The disordered stretch occupies residues 58–81 (TQSNRGGVQPSKRKPLPPLPQEPP). One can recognise an SH3 domain in the interval 82–142 (DERIQVKALY…PSNYVTENRL (61 aa)). Tyrosine 91 bears the Phosphotyrosine; by autocatalysis mark. Residues 150–246 (WYHKNITRNQ…GLISRLRYPI (97 aa)) enclose the SH2 domain. In terms of domain architecture, Protein kinase spans 271–527 (LAFVKEIGSG…QVLTEIAETW (257 aa)). ATP contacts are provided by residues 277 to 285 (IGSGQFGVV) and lysine 299. Aspartate 390 functions as the Proton acceptor in the catalytic mechanism. Tyrosine 420 carries the phosphotyrosine; by FYN and autocatalysis modification.

This sequence belongs to the protein kinase superfamily. Tyr protein kinase family. TEC subfamily. As to quaternary structure, interacts with PARP1 and EEF1A1. Interacts with SH2D2A. Interacts with FYN. Phosphorylated at Tyr-420 by FYN. Autophosphorylation at Tyr-91 is critical for the activation of TXK, leading to the up-regulation of IFN-gamma gene transcription. In terms of processing, the cysteine string at the N-terminus is palmitoylated and required for the proper subcellular location. In terms of tissue distribution, expressed in early thymocytes, T-cells and mast cells.

It localises to the cytoplasm. The protein localises to the nucleus. Its subcellular location is the cell membrane. It carries out the reaction L-tyrosyl-[protein] + ATP = O-phospho-L-tyrosyl-[protein] + ADP + H(+). With respect to regulation, activated by phosphorylation by FYN. In terms of biological role, non-receptor tyrosine kinase that plays a redundant role with ITK in regulation of the adaptive immune response. Regulates the development, function and differentiation of conventional T-cells and nonconventional NKT-cells. When antigen presenting cells (APC) activate T-cell receptor (TCR), a series of phosphorylation leads to the recruitment of TXK to the cell membrane, where it is phosphorylated at Tyr-420. Phosphorylation leads to TXK full activation. Also contributes to signaling from many receptors and participates in multiple downstream pathways, including regulation of the actin cytoskeleton. Like ITK, can phosphorylate PLCG1, leading to its localization in lipid rafts and activation, followed by subsequent cleavage of its substrates. In turn, the endoplasmic reticulum releases calcium in the cytoplasm and the nuclear activator of activated T-cells (NFAT) translocates into the nucleus to perform its transcriptional duty. Plays a role in the positive regulation of IFNG transcription in T-helper 1 cells as part of an IFNG promoter-binding complex with PARP1 and EEF1A1. Within the complex, phosphorylates both PARP1 and EEF1A1. Also phosphorylates key sites in LCP2 leading to the up-regulation of Th1 preferred cytokine IL-2. Phosphorylates 'Tyr-201' of CTLA4 which leads to the association of PI-3 kinase with the CTLA4 receptor. The chain is Tyrosine-protein kinase TXK (Txk) from Mus musculus (Mouse).